The primary structure comprises 260 residues: DNA-directed RNA polymerase subunit Rpo3 (260 aa).

It belongs to the archaeal Rpo3/eukaryotic RPB3 RNA polymerase subunit family. In terms of assembly, part of the RNA polymerase complex.

The protein resides in the cytoplasm. The catalysed reaction is RNA(n) + a ribonucleoside 5'-triphosphate = RNA(n+1) + diphosphate. In terms of biological role, DNA-dependent RNA polymerase (RNAP) catalyzes the transcription of DNA into RNA using the four ribonucleoside triphosphates as substrates. This chain is DNA-directed RNA polymerase subunit Rpo3, found in Pyrobaculum aerophilum (strain ATCC 51768 / DSM 7523 / JCM 9630 / CIP 104966 / NBRC 100827 / IM2).